The primary structure comprises 173 residues: Putative phosphoesterase GTNG_0743 (173 aa).

The Proton donor role is filled by His34. Short sequence motifs (HXTX) lie at residues 34 to 37 (HITL) and 115 to 118 (HITI). Residue His115 is the Proton acceptor of the active site.

Belongs to the 2H phosphoesterase superfamily. YjcG family.

This is Putative phosphoesterase GTNG_0743 from Geobacillus thermodenitrificans (strain NG80-2).